A 525-amino-acid chain; its full sequence is GMP synthase [glutamine-hydrolyzing] (525 aa).

The region spanning 9–207 (RILILDFGSQ…VRDICQCEAL (199 aa)) is the Glutamine amidotransferase type-1 domain. The Nucleophile role is filled by C86. Catalysis depends on residues H181 and E183. A GMPS ATP-PPase domain is found at 208-400 (WTPAKIIDDA…LGLPYDMLYR (193 aa)). Residue 235 to 241 (SGGVDSS) coordinates ATP.

In terms of assembly, homodimer.

The enzyme catalyses XMP + L-glutamine + ATP + H2O = GMP + L-glutamate + AMP + diphosphate + 2 H(+). Its pathway is purine metabolism; GMP biosynthesis; GMP from XMP (L-Gln route): step 1/1. Functionally, catalyzes the synthesis of GMP from XMP. The chain is GMP synthase [glutamine-hydrolyzing] from Escherichia coli O127:H6 (strain E2348/69 / EPEC).